A 161-amino-acid polypeptide reads, in one-letter code: UPF0178 protein BSUIS_A1819 (161 aa).

Belongs to the UPF0178 family.

This chain is UPF0178 protein BSUIS_A1819, found in Brucella suis (strain ATCC 23445 / NCTC 10510).